A 126-amino-acid chain; its full sequence is Fluoride-specific ion channel FluC (126 aa).

The next 4 membrane-spanning stretches (helical) occupy residues 4-24, 35-55, 67-87, and 100-120; these read YLYI…VSGV, IGTF…TGLF, LLIL…MFES, and ALNI…GLAL. 2 residues coordinate Na(+): glycine 75 and threonine 78.

It belongs to the fluoride channel Fluc/FEX (TC 1.A.43) family.

Its subcellular location is the cell inner membrane. It carries out the reaction fluoride(in) = fluoride(out). Its activity is regulated as follows. Na(+) is not transported, but it plays an essential structural role and its presence is essential for fluoride channel function. Its function is as follows. Fluoride-specific ion channel. Important for reducing fluoride concentration in the cell, thus reducing its toxicity. This Maridesulfovibrio salexigens (strain ATCC 14822 / DSM 2638 / NCIMB 8403 / VKM B-1763) (Desulfovibrio salexigens) protein is Fluoride-specific ion channel FluC.